Reading from the N-terminus, the 207-residue chain is RNA chaperone ProQ (207 aa).

The interval 100–156 (TLAESKAKVQARRKEQAQKARDEEKSKPKTKKAPQQRRANKPQAQKPAKQPVETRAL) is disordered. Positions 111–126 (RRKEQAQKARDEEKSK) are enriched in basic and acidic residues. Residues 127-139 (PKTKKAPQQRRAN) are compositionally biased toward basic residues.

This sequence belongs to the ProQ family.

Its subcellular location is the cytoplasm. Functionally, RNA chaperone with significant RNA binding, RNA strand exchange and RNA duplexing activities. The polypeptide is RNA chaperone ProQ (Vibrio vulnificus (strain CMCP6)).